A 905-amino-acid polypeptide reads, in one-letter code: Sun domain-containing protein 1 (905 aa).

Disordered regions lie at residues 1-21 (MSGDYKPNYQSSPSRKRLPLQ), 41-166 (NNTV…ILKQ), and 207-242 (QQQQQQQRNNNNNSNSSNNNNTSTTIKRNNQQIDNN). The Nuclear portion of the chain corresponds to 1-290 (MSGDYKPNYQ…NNNNKVNFKQ (290 aa)). Composition is skewed to low complexity over residues 41 to 67 (NNTVNNNSSNNSNNHLLHNSNPNSSYL) and 75 to 101 (SNQINIRNNSNSNSNTNNITSKKASSS). Over residues 107-116 (KVDHNSHNNN) the composition is skewed to basic and acidic residues. The segment covering 117–126 (DDDDIEDDVD) has biased composition (acidic residues). The segment covering 129 to 146 (YSTNNASSNILHNRFSNS) has biased composition (polar residues). The stretch at 170–221 (LYNHLNNQIQQQQQQQQQQQQQQQQQQQQQQQQQQQQQQQQQQQRNNNNNSN) forms a coiled coil. Low complexity predominate over residues 207 to 227 (QQQQQQQRNNNNNSNSSNNNN). A helical transmembrane segment spans residues 291–311 (AIWIFIFSVLFIGCLLGLFST). Residues 312 to 905 (NFYGIHIYFP…IEKQQQSDEL (594 aa)) are Perinuclear space-facing. Coiled coils occupy residues 359-456 (KKNE…QLIQ) and 504-609 (REFN…TQQF). The SUN domain occupies 662-860 (GASIEYNALH…YRFRVHGYQI (199 aa)). Residues 864–901 (EQEQIQIIQEEQSFKQEEINQQQIEQIEQIEQIEKQQQ) adopt a coiled-coil conformation.

Homodimer and homooligomer.

The protein resides in the nucleus membrane. Its function is as follows. May have an important role in defining the spacing of the nuclear envelope lumen. Essential for centrosome attachment to the nucleus, maintenance of correct ploidy, proper mitosis, association of the centromere cluster with the centrosome and the maintenance of genome stability. Requires direct chromatin binding for inner nuclear membrane targeting. In Dictyostelium discoideum (Social amoeba), this protein is Sun domain-containing protein 1 (sun1).